Here is a 418-residue protein sequence, read N- to C-terminus: Glutamyl-tRNA(Gln) amidotransferase subunit D (418 aa).

The region spanning 74-405 (KNISILSTGG…KEAKELMSKN (332 aa)) is the Asparaginase/glutaminase domain. Catalysis depends on residues Thr84, Thr160, Asp161, and Lys237.

Belongs to the asparaginase 1 family. GatD subfamily. Heterodimer of GatD and GatE.

It catalyses the reaction L-glutamyl-tRNA(Gln) + L-glutamine + ATP + H2O = L-glutaminyl-tRNA(Gln) + L-glutamate + ADP + phosphate + H(+). In terms of biological role, allows the formation of correctly charged Gln-tRNA(Gln) through the transamidation of misacylated Glu-tRNA(Gln) in organisms which lack glutaminyl-tRNA synthetase. The reaction takes place in the presence of glutamine and ATP through an activated gamma-phospho-Glu-tRNA(Gln). The GatDE system is specific for glutamate and does not act on aspartate. This Methanococcus maripaludis (strain DSM 14266 / JCM 13030 / NBRC 101832 / S2 / LL) protein is Glutamyl-tRNA(Gln) amidotransferase subunit D.